A 76-amino-acid chain; its full sequence is Sea anemone sodium channel inhibitor type I (76 aa).

Residues methionine 1 to glycine 19 form the signal peptide. A propeptide spanning residues leucine 20–alanine 30 is cleaved from the precursor. 3 disulfides stabilise this stretch: cysteine 37–cysteine 72, cysteine 39–cysteine 60, and cysteine 53–cysteine 73.

It belongs to the sea anemone sodium channel inhibitory toxin family. Type I subfamily. Expressed in acontia, a specialised envenomation structure laden with batteries of venom-containing nematocysts found only in the superfamily Metridioidea.

The protein resides in the secreted. The protein localises to the nematocyst. In terms of biological role, may affect sodium channels (Nav). The sequence is that of Sea anemone sodium channel inhibitor type I from Calliactis polypus (Hermit crab anemone).